A 238-amino-acid chain; its full sequence is Uridylate kinase (238 aa).

12–15 (KLSG) contacts ATP. The tract at residues 20–25 (GDEGFG) is involved in allosteric activation by GTP. Position 54 (G54) interacts with UMP. The ATP site is built by G55 and R59. UMP is bound by residues D74 and 135–142 (TGSPFFTT). ATP contacts are provided by T162, Y168, and D171.

It belongs to the UMP kinase family. In terms of assembly, homohexamer.

It localises to the cytoplasm. It catalyses the reaction UMP + ATP = UDP + ADP. Its pathway is pyrimidine metabolism; CTP biosynthesis via de novo pathway; UDP from UMP (UMPK route): step 1/1. Its activity is regulated as follows. Allosterically activated by GTP. Inhibited by UTP. Functionally, catalyzes the reversible phosphorylation of UMP to UDP. This Histophilus somni (strain 129Pt) (Haemophilus somnus) protein is Uridylate kinase.